We begin with the raw amino-acid sequence, 1035 residues long: Condensin complex subunit 3 (1035 aa).

2 HEAT repeats span residues 113-150 (RFVD…NIGE) and 153-191 (ESLF…EEQT). At Ser198 the chain carries Phosphoserine. The HEAT 3 repeat unit spans residues 201–239 (EENFEATRTLVASIQNDPSAEVRRAAMLNLINDNNTRPY). Residues 500–536 (EEKIKSKKINRRNETSVDEEDENGTHNDEVNEDEEDD) are disordered. 2 HEAT repeats span residues 597–635 (ILIA…LDVK) and 827–864 (VQLT…SSEQ). Over residues 909–919 (ERSETQTKDEN) the composition is skewed to basic and acidic residues. Disordered stretches follow at residues 909-934 (ERSE…GNSF) and 959-995 (TTVN…LENM). 2 stretches are compositionally biased toward polar residues: residues 920 to 934 (NTAN…GNSF) and 959 to 973 (TTVN…TEQS). Ser933 bears the Phosphoserine mark. The residue at position 981 (Ser981) is a Phosphoserine. Over residues 986–995 (IDTSKNLENM) the composition is skewed to polar residues. Phosphoserine is present on Ser1008. The tract at residues 1012-1035 (PDEKSDAMSIDEEDKDSESFSEVC) is disordered.

This sequence belongs to the CND3 (condensin subunit 3) family. Component of the condensin complex, which contains the SMC2 and SMC4 heterodimer, and three non SMC subunits that probably regulate the complex: BRN1, YCS4 and YCG1/YCS5.

The protein localises to the nucleus. Its subcellular location is the cytoplasm. It localises to the chromosome. Regulatory subunit of the condensin complex, a complex required for conversion of interphase chromatin into mitotic-like condense chromosomes. The condensin complex probably introduces positive supercoils into relaxed DNA in the presence of type I topoisomerases and converts nicked DNA into positive knotted forms in the presence of type II topoisomerases. The condensin complex probably also plays a role during interphase. In Saccharomyces cerevisiae (strain ATCC 204508 / S288c) (Baker's yeast), this protein is Condensin complex subunit 3 (YCG1).